A 334-amino-acid chain; its full sequence is Beta-ketoacyl-[acyl-carrier-protein] synthase III (334 aa).

Active-site residues include cysteine 114 and histidine 260. The ACP-binding stretch occupies residues glutamine 261 to arginine 265. Residue asparagine 290 is part of the active site.

The protein belongs to the thiolase-like superfamily. FabH family. As to quaternary structure, homodimer.

The protein resides in the cytoplasm. It catalyses the reaction malonyl-[ACP] + acetyl-CoA + H(+) = 3-oxobutanoyl-[ACP] + CO2 + CoA. It participates in lipid metabolism; fatty acid biosynthesis. In terms of biological role, catalyzes the condensation reaction of fatty acid synthesis by the addition to an acyl acceptor of two carbons from malonyl-ACP. Catalyzes the first condensation reaction which initiates fatty acid synthesis and may therefore play a role in governing the total rate of fatty acid production. Possesses both acetoacetyl-ACP synthase and acetyl transacylase activities. Its substrate specificity determines the biosynthesis of branched-chain and/or straight-chain of fatty acids. This is Beta-ketoacyl-[acyl-carrier-protein] synthase III from Clostridium tetani (strain Massachusetts / E88).